The primary structure comprises 335 residues: MAEIYDFDKSAWDVKGSIQPIGPKTYSDGRLIPQVRVIDPGLGVRKDECFSYIFLWGLSEDSDPLSPPIGRTFGSLPLGVGRSTARPEELLKEATILDILVRRTAGFNEQLVFYDNSPLKVLTPWKKVLTSGSVFNANQVCETVNLIPLDFYQRFRVVYMSITRLSDNGGYDIPRHWPEFRSMNAIAFNSLVTIRFEQSPIEHWRILNSEHLLVATFMVHIGNFQRKKTDMYSADYCKPKIEKMGLVFALGGIGGTSLHIRATGKMSKTLWALEGFKKHLCYPLMDINEDLNRELWRSKCKIVRIQAVLQPSVPQDFRVYRDVIIEDDQGLFKIL.

It belongs to the morbillivirus/respirovirus/rubulavirus M protein family.

The protein localises to the virion. Functionally, the M protein has a crucial role in virus assembly and interacts with the RNP complex as well as with the viral membrane. This Rinderpest virus (strain Kabete O) (RDV) protein is Matrix protein (M).